The following is a 113-amino-acid chain: Ribulose bisphosphate carboxylase small subunit (113 aa).

This sequence belongs to the RuBisCO small chain family. As to quaternary structure, heterohexadecamer of 8 large and 8 small subunits. RuBisCO interacts with the C-terminus of CcmM, and can be found in complexes that also include carbonic anhydrase (ccaA).

The protein resides in the carboxysome. Functionally, ruBisCO catalyzes two reactions: the carboxylation of D-ribulose 1,5-bisphosphate, the primary event in carbon dioxide fixation, as well as the oxidative fragmentation of the pentose substrate in the photorespiration process. Both reactions occur simultaneously and in competition at the same active site. Although the small subunit is not catalytic it is essential for maximal activity. The sequence is that of Ribulose bisphosphate carboxylase small subunit from Synechocystis sp. (strain ATCC 27184 / PCC 6803 / Kazusa).